The primary structure comprises 1033 residues: Tyrosine-protein kinase-like otk (1033 aa).

Positions 1 to 22 are cleaved as a signal peptide; that stretch reads MTARMISIYGLVLASMMASVWA. The Extracellular portion of the chain corresponds to 23–581; sequence SSSRFQRLPQ…GGDGFLVTRA (559 aa). 5 Ig-like C2-type domains span residues 25-108, 109-199, 251-365, 368-463, and 468-558; these read SRFQ…REAS, PPAK…RVMS, PEDL…LPIS, PGVL…VAIN, and PKFS…VQLV. N39 carries N-linked (GlcNAc...) asparagine glycosylation. Intrachain disulfides connect C46–C95, C137–C188, C276–C354, and C399–C447. Residues N336, N417, N429, N444, N457, N512, and N524 are each glycosylated (N-linked (GlcNAc...) asparagine). A disulfide bridge connects residues C490 and C542. The helical transmembrane segment at 582-602 threads the bilayer; the sequence is VLITMTVALAYIVLVVGLMLW. The Cytoplasmic segment spans residues 603–1033; the sequence is CRYRRQARKA…LSKAMQSVEK (431 aa). Disordered stretches follow at residues 617 to 679 and 718 to 760; these read LSTK…KKSA and SPTD…KTSM. Positions 655-673 are enriched in polar residues; sequence KSSGDAQKSDDTACSQQSR. Position 678 is a phosphoserine (S678). One can recognise a Protein kinase; inactive domain in the interval 692 to 1028; the sequence is LSELIQIGRG…QLGAALSKAM (337 aa). The segment covering 720 to 731 has biased composition (basic and acidic residues); sequence TDKDADTEKQHS.

Belongs to the protein kinase superfamily. Tyr protein kinase family. Insulin receptor subfamily. In terms of assembly, interacts with plexA; component of a receptor complex that mediates the repulsive signaling in response to Semaphorin ligands.

The protein resides in the cell membrane. Functionally, acts as a calcium-dependent, homophilic cell adhesion molecule that regulates neural recognition during the development of the nervous system. Component of the repulsive Plexin signaling response to regulate motor axon guidance at the embryonic stage. Also component of a receptor complex that is required in the adult visual system to innervate the lamina layer; specific targeting of R1-R6 axons. The protein is Tyrosine-protein kinase-like otk of Drosophila erecta (Fruit fly).